Here is a 135-residue protein sequence, read N- to C-terminus: Large ribosomal subunit protein uL16c (135 aa).

It belongs to the universal ribosomal protein uL16 family. As to quaternary structure, part of the 50S ribosomal subunit.

It localises to the plastid. The protein resides in the chloroplast. The protein is Large ribosomal subunit protein uL16c of Ranunculus macranthus (Large buttercup).